The following is a 488-amino-acid chain: Mannosylglycerate hydrolase MGH1 (488 aa).

Substrate-binding positions include Tyr-94, 98–101, Tyr-146, Gln-167, and Gly-227; that span reads WNWD. Asp-229 (proton donor) is an active-site residue. Substrate contacts are provided by residues Arg-262 and 415–416; that span reads YW. Residue Glu-459 is the Proton acceptor of the active site.

The protein belongs to the glycosyl hydrolase 63 family.

The enzyme catalyses (2R)-2-O-(alpha-D-mannosyl)-glycerate + H2O = D-mannose + (R)-glycerate. The catalysed reaction is (2R)-2-O-(alpha-D-glucopyranosyl)-glycerate + H2O = (R)-glycerate + D-glucose. Its activity is regulated as follows. Activity is not dependent on divalent cations, but it is enhanced by Mn(2+). In terms of biological role, catalyzes the hydrolysis of alpha-D-mannosyl-glycerate (MG) to D-glycerate and D-mannose. Can also hydrolyze alpha-D-glucopyranosyl-glycerate (GG)with lower efficiency. This is Mannosylglycerate hydrolase MGH1 from Selaginella moellendorffii (Spikemoss).